Reading from the N-terminus, the 809-residue chain is Leucine--tRNA ligase (809 aa).

The 'HIGH' region motif lies at 40–50 (PYPSGRIHMGH). A 'KMSKS' region motif is present at residues 579–583 (KMSKS). K582 is a binding site for ATP.

It belongs to the class-I aminoacyl-tRNA synthetase family.

The protein localises to the cytoplasm. It carries out the reaction tRNA(Leu) + L-leucine + ATP = L-leucyl-tRNA(Leu) + AMP + diphosphate. The protein is Leucine--tRNA ligase of Campylobacter jejuni (strain RM1221).